The primary structure comprises 83 residues: Vitellogenesis-inhibiting hormone (83 aa).

Cystine bridges form between C15–C52, C32–C48, and C35–C61.

As to expression, found in the sinus glands of both male and female. Found also in the brain; the neuroendocrine structures of the protocerebrum.

It is found in the secreted. In terms of biological role, inhibits secondary vitellogenesis in females. Has no hyperglycemic or molt-inhibiting activity. The protein is Vitellogenesis-inhibiting hormone of Armadillidium vulgare (Pillbug).